We begin with the raw amino-acid sequence, 390 residues long: Manganese peroxidase 2 (390 aa).

A signal peptide spans 1 to 23 (MAFNFAAILAFVSLAAVTSAAPS). Cystine bridges form between C27/C39, C38/C313, C57/C141, C277/C343, and C365/C372. Residues E59 and E63 each coordinate Mn(2+). H70 functions as the Proton acceptor in the catalytic mechanism. The Ca(2+) site is built by D71, G86, D88, and S90. A glycan (N-linked (GlcNAc...) asparagine) is linked at N155. Residue H197 coordinates heme b. Ca(2+) is bound at residue S198. D203 serves as a coordination point for Mn(2+). Ca(2+) is bound by residues D215, T217, and D222. N241 carries N-linked (GlcNAc...) asparagine glycosylation.

This sequence belongs to the peroxidase family. Ligninase subfamily. It depends on heme b as a cofactor. The cofactor is Ca(2+).

It localises to the secreted. The enzyme catalyses 2 Mn(2+) + H2O2 + 2 H(+) = 2 Mn(3+) + 2 H2O. Catalyzes the oxidation of Mn(2+) to Mn(3+). The latter, acting as a diffusible redox mediator, is capable of oxidizing a variety of lignin compounds. The chain is Manganese peroxidase 2 (mnp2) from Phlebia radiata (White-rot fungus).